Here is a 493-residue protein sequence, read N- to C-terminus: tRNA (uracil-5-)-methyltransferase homolog B (493 aa).

The N-terminal 14 residues, 1–14 (MHNPRLFLSRAGFF), are a transit peptide targeting the mitochondrion. 3 residues coordinate S-adenosyl-L-methionine: Gln-312, Glu-362, and Asn-412. Catalysis depends on Cys-440, which acts as the Nucleophile. Residue Glu-486 is the Proton acceptor of the active site.

The protein belongs to the class I-like SAM-binding methyltransferase superfamily. RNA M5U methyltransferase family.

The protein resides in the mitochondrion matrix. The enzyme catalyses uridine(54) in tRNA + S-adenosyl-L-methionine = 5-methyluridine(54) in tRNA + S-adenosyl-L-homocysteine + H(+). The catalysed reaction is a uridine in 12S rRNA + S-adenosyl-L-methionine = a 5-methyluridine in 12S rRNA + S-adenosyl-L-homocysteine + H(+). Functionally, mitochondrial S-adenosyl-L-methionine-dependent methyltransferase that catalyzes the formation of 5-methyl-uridine in tRNAs and 12S rRNA. Catalyzes the methylation of uridine at position 54 (m5U54) in all tRNAs. Specifically methylates the uridine in position 425 of 12S rRNA (m5U425). Does not affect RNA stability or mitochondrial translation. This Mus musculus (Mouse) protein is tRNA (uracil-5-)-methyltransferase homolog B.